Reading from the N-terminus, the 534-residue chain is Arginine--tRNA ligase (534 aa).

The 'HIGH' region signature appears at Ala120–His130.

The protein belongs to the class-I aminoacyl-tRNA synthetase family. As to quaternary structure, monomer.

The protein resides in the cytoplasm. The catalysed reaction is tRNA(Arg) + L-arginine + ATP = L-arginyl-tRNA(Arg) + AMP + diphosphate. The sequence is that of Arginine--tRNA ligase from Mesomycoplasma hyopneumoniae (strain 232) (Mycoplasma hyopneumoniae).